The primary structure comprises 362 residues: Phosphoserine aminotransferase (362 aa).

2 residues coordinate L-glutamate: Ser-9 and Arg-42. Pyridoxal 5'-phosphate contacts are provided by residues 76 to 77 (GR), Trp-102, Thr-153, Asp-174, and Gln-197. Lys-198 carries the N6-(pyridoxal phosphate)lysine modification. Position 239–240 (239–240 (NT)) interacts with pyridoxal 5'-phosphate.

This sequence belongs to the class-V pyridoxal-phosphate-dependent aminotransferase family. SerC subfamily. In terms of assembly, homodimer. Requires pyridoxal 5'-phosphate as cofactor.

The protein localises to the cytoplasm. It catalyses the reaction O-phospho-L-serine + 2-oxoglutarate = 3-phosphooxypyruvate + L-glutamate. It carries out the reaction 4-(phosphooxy)-L-threonine + 2-oxoglutarate = (R)-3-hydroxy-2-oxo-4-phosphooxybutanoate + L-glutamate. Its pathway is amino-acid biosynthesis; L-serine biosynthesis; L-serine from 3-phospho-D-glycerate: step 2/3. It participates in cofactor biosynthesis; pyridoxine 5'-phosphate biosynthesis; pyridoxine 5'-phosphate from D-erythrose 4-phosphate: step 3/5. In terms of biological role, catalyzes the reversible conversion of 3-phosphohydroxypyruvate to phosphoserine and of 3-hydroxy-2-oxo-4-phosphonooxybutanoate to phosphohydroxythreonine. The protein is Phosphoserine aminotransferase of Escherichia coli O157:H7.